The chain runs to 340 residues: UDP-N-acetylglucosamine--N-acetylmuramyl-(pentapeptide) pyrophosphoryl-undecaprenol N-acetylglucosamine transferase (340 aa).

Residues 10–12 (TGG), Asn-110, Ser-171, and Gln-272 each bind UDP-N-acetyl-alpha-D-glucosamine.

The protein belongs to the glycosyltransferase 28 family. MurG subfamily.

The protein resides in the cell membrane. The enzyme catalyses di-trans,octa-cis-undecaprenyl diphospho-N-acetyl-alpha-D-muramoyl-L-alanyl-D-glutamyl-meso-2,6-diaminopimeloyl-D-alanyl-D-alanine + UDP-N-acetyl-alpha-D-glucosamine = di-trans,octa-cis-undecaprenyl diphospho-[N-acetyl-alpha-D-glucosaminyl-(1-&gt;4)]-N-acetyl-alpha-D-muramoyl-L-alanyl-D-glutamyl-meso-2,6-diaminopimeloyl-D-alanyl-D-alanine + UDP + H(+). Its pathway is cell wall biogenesis; peptidoglycan biosynthesis. Functionally, cell wall formation. Catalyzes the transfer of a GlcNAc subunit on undecaprenyl-pyrophosphoryl-MurNAc-pentapeptide (lipid intermediate I) to form undecaprenyl-pyrophosphoryl-MurNAc-(pentapeptide)GlcNAc (lipid intermediate II). In Wolbachia pipientis subsp. Culex pipiens (strain wPip), this protein is UDP-N-acetylglucosamine--N-acetylmuramyl-(pentapeptide) pyrophosphoryl-undecaprenol N-acetylglucosamine transferase.